Reading from the N-terminus, the 130-residue chain is Small ribosomal subunit protein uS8 (130 aa).

It belongs to the universal ribosomal protein uS8 family. In terms of assembly, part of the 30S ribosomal subunit. Contacts proteins S5 and S12.

In terms of biological role, one of the primary rRNA binding proteins, it binds directly to 16S rRNA central domain where it helps coordinate assembly of the platform of the 30S subunit. The protein is Small ribosomal subunit protein uS8 of Pseudomonas fluorescens (strain ATCC BAA-477 / NRRL B-23932 / Pf-5).